The chain runs to 120 residues: Glycine cleavage system H protein (120 aa).

The region spanning 17-99 (VATVGITNYA…QGAGWFFKLK (83 aa)) is the Lipoyl-binding domain. Lys-58 is subject to N6-lipoyllysine.

This sequence belongs to the GcvH family. In terms of assembly, the glycine cleavage system is composed of four proteins: P, T, L and H. (R)-lipoate is required as a cofactor.

Functionally, the glycine cleavage system catalyzes the degradation of glycine. The H protein shuttles the methylamine group of glycine from the P protein to the T protein. This Rhizobium leguminosarum bv. trifolii (strain WSM2304) protein is Glycine cleavage system H protein.